A 474-amino-acid polypeptide reads, in one-letter code: Bifunctional protein HldE (474 aa).

The segment at 1-317 is ribokinase; it reads MKLSMPRFDQ…RRAIQRSEGS (317 aa). An ATP-binding site is contributed by 194–197; that stretch reads NLSE. D263 is a catalytic residue. The cytidylyltransferase stretch occupies residues 343–474; that stretch reads FTNGCFDILH…AIVEKIRNNE (132 aa).

In the N-terminal section; belongs to the carbohydrate kinase PfkB family. This sequence in the C-terminal section; belongs to the cytidylyltransferase family. In terms of assembly, homodimer.

The catalysed reaction is D-glycero-beta-D-manno-heptose 7-phosphate + ATP = D-glycero-beta-D-manno-heptose 1,7-bisphosphate + ADP + H(+). The enzyme catalyses D-glycero-beta-D-manno-heptose 1-phosphate + ATP + H(+) = ADP-D-glycero-beta-D-manno-heptose + diphosphate. Its pathway is nucleotide-sugar biosynthesis; ADP-L-glycero-beta-D-manno-heptose biosynthesis; ADP-L-glycero-beta-D-manno-heptose from D-glycero-beta-D-manno-heptose 7-phosphate: step 1/4. It participates in nucleotide-sugar biosynthesis; ADP-L-glycero-beta-D-manno-heptose biosynthesis; ADP-L-glycero-beta-D-manno-heptose from D-glycero-beta-D-manno-heptose 7-phosphate: step 3/4. Its function is as follows. Catalyzes the phosphorylation of D-glycero-D-manno-heptose 7-phosphate at the C-1 position to selectively form D-glycero-beta-D-manno-heptose-1,7-bisphosphate. Functionally, catalyzes the ADP transfer from ATP to D-glycero-beta-D-manno-heptose 1-phosphate, yielding ADP-D-glycero-beta-D-manno-heptose. This chain is Bifunctional protein HldE, found in Pseudomonas fluorescens (strain SBW25).